Consider the following 604-residue polypeptide: MCGIVGVVGNRNATDILMQGLEKLEYRGYDSAGIFVANANQTNLIKSVGRIADLRAKIGIDVAGSTGIGHTRWATHGQSTEDNAHPHTSQTGRFVLVHNGVIENYLHIKTEFLAGHDFKGQTDTEIAVHLIGKFVEEDKLSVLEAFKKSLSIIEGSYAFALMDSQATDTIYVAKNKSPLLIGLGEGYNMVCSDAMAMIRETSEFMEIHDKELVILTKDKVTVTDYDGKELIRDSYTAELDLSDIGKGTYPFYMLKEIDEQPTVMRQLISTYADETGNVQVDPAIITSIQEADRLYILAAGTSYHAGFATKNMLEQLTDTPVELGVASEWGYHMPLLSKKPMFILLSQSGETADSRQVLVKANAMGIPSLTVTNVPGSTLSREATYTMLIHAGPEIAVASTKAYTAQIAALAFLAKAVGEANGKQEALDFNLVHELSLVAQSIEATLSEKDLVAEKVQALLATTRNAFYIGRGNDYYVAMEAALKLKEISYIQCEGFAAGELKHGTISLIEEDTPVIALISSSQLVASHTRGNIQEVAARGAHVLTVVEEGLDREGDDIIVNKVHPFLAPIAMVIPTQLIAYYASLQRGLDVDKPRNLAKAVTVE.

Residue Cys2 is the Nucleophile; for GATase activity of the active site. The 217-residue stretch at 2-218 (CGIVGVVGNR…DKELVILTKD (217 aa)) folds into the Glutamine amidotransferase type-2 domain. 2 SIS domains span residues 284 to 423 (IITS…ANGK) and 456 to 594 (VQAL…VDKP). Lys599 functions as the For Fru-6P isomerization activity in the catalytic mechanism.

As to quaternary structure, homodimer.

The protein localises to the cytoplasm. The enzyme catalyses D-fructose 6-phosphate + L-glutamine = D-glucosamine 6-phosphate + L-glutamate. Its function is as follows. Catalyzes the first step in hexosamine metabolism, converting fructose-6P into glucosamine-6P using glutamine as a nitrogen source. This Streptococcus pyogenes serotype M1 protein is Glutamine--fructose-6-phosphate aminotransferase [isomerizing].